The primary structure comprises 382 residues: ATP phosphoribosyltransferase regulatory subunit (382 aa).

This sequence belongs to the class-II aminoacyl-tRNA synthetase family. HisZ subfamily. As to quaternary structure, heteromultimer composed of HisG and HisZ subunits.

The protein resides in the cytoplasm. It participates in amino-acid biosynthesis; L-histidine biosynthesis; L-histidine from 5-phospho-alpha-D-ribose 1-diphosphate: step 1/9. Required for the first step of histidine biosynthesis. May allow the feedback regulation of ATP phosphoribosyltransferase activity by histidine. The chain is ATP phosphoribosyltransferase regulatory subunit from Burkholderia vietnamiensis (strain G4 / LMG 22486) (Burkholderia cepacia (strain R1808)).